Here is a 347-residue protein sequence, read N- to C-terminus: Tetracycline resistance determinant (347 aa).

8 helical membrane passes run 3–20, 30–52, 73–95, 108–130, 137–156, 161–183, 204–226, and 294–316; these read VLGAAALALFLVPLLIVA, SPAALALFALGAAGLAVFIPVEL, CSAVNFTIGVGIFGTVTTLPLFL, LVVIPFMLGTIASQMVSGKLIAS, LAIVGLGSMAGALLAMATTG, MWGIVLIVLWLGVGIGLSQTVIT, CAGQIGGSTGIAVLFSVMFAVAL, and GFHIMFLPGGVVLLAGFVMTWFL. The tract at residues 321–347 is disordered; sequence EETAPEEERPAESGAGAKNGPLPASDA.

This sequence belongs to the major facilitator superfamily. TCR/Tet family.

Its subcellular location is the cell membrane. Resistance to tetracycline by an active tetracycline efflux. This is an energy-dependent process that decreases the accumulation of the antibiotic in whole cells. This protein functions as a metal-tetracycline/H(+) antiporter. The protein is Tetracycline resistance determinant (tetB) of Streptomyces rimosus.